Here is a 182-residue protein sequence, read N- to C-terminus: ATP-dependent protease subunit HslV (182 aa).

The active site involves Thr-12. Residues Ala-167, Cys-170, and Thr-173 each coordinate Na(+).

This sequence belongs to the peptidase T1B family. HslV subfamily. A double ring-shaped homohexamer of HslV is capped on each side by a ring-shaped HslU homohexamer. The assembly of the HslU/HslV complex is dependent on binding of ATP.

It localises to the cytoplasm. It carries out the reaction ATP-dependent cleavage of peptide bonds with broad specificity.. Allosterically activated by HslU binding. In terms of biological role, protease subunit of a proteasome-like degradation complex believed to be a general protein degrading machinery. This Chlorobium phaeobacteroides (strain BS1) protein is ATP-dependent protease subunit HslV.